We begin with the raw amino-acid sequence, 370 residues long: Prolactin-releasing peptide receptor (370 aa).

The Extracellular segment spans residues 1–62 (MASSTTRGPR…LQLVHQLKGL (62 aa)). N-linked (GlcNAc...) asparagine glycosylation is found at Asn-27 and Asn-36. The chain crosses the membrane as a helical span at residues 63-83 (IVLLYSVVVVVGLVGNCLLVL). The Cytoplasmic portion of the chain corresponds to 84-101 (VIARVRRLHNVTNFLIGN). The helical transmembrane segment at 102-122 (LALSDVLMCTACVPLTLAYAF) threads the bilayer. At 123–126 (EPRG) the chain is on the extracellular side. The helical transmembrane segment at 127–147 (WVFGGGLCHLVFFLQPVTVYV) threads the bilayer. A disulfide bridge links Cys-134 with Cys-211. The Cytoplasmic segment spans residues 148 to 175 (SVFTLTTIAVDRYVVLVHPLRRRISLRL). Residues 176 to 196 (SAYAVLAIWALSAVLALPAAV) traverse the membrane as a helical segment. Residues 197–225 (HTYHVELKPHDVRLCEEFWGSQERQRQLY) are Extracellular-facing. A helical transmembrane segment spans residues 226-246 (AWGLLLVTYLLPLLVILLSYV). The Cytoplasmic portion of the chain corresponds to 247-276 (RVSVKLRNRVVPGCVTQSQADWDRARRRRT). A helical transmembrane segment spans residues 277–297 (FCLLVVIVVVFAVCWLPLHVF). Residues 298–317 (NLLRDLDPHAIDPYAFGLVQ) lie on the Extracellular side of the membrane. The helical transmembrane segment at 318 to 338 (LLCHWLAMSSACYNPFIYAWL) threads the bilayer. Residues 339 to 369 (HDSFREELRKLLVAWPRKIAPHGQNMTVSVV) are Cytoplasmic-facing. Positions 365-370 (TVSVVI) are required for interaction with GRIP1, GRIP2 and PICK1.

It belongs to the G-protein coupled receptor 1 family. Interacts through its C-terminal region with the PDZ domain-containing proteins GRIP1, GRIP2 and PICK1. Interacts with PDZ domains 4 and 5 of GRIP1 and with the PDZ domain of PICK1. As to expression, only detected in the pituitary gland and in all cell types of pituitary adenomas.

It localises to the cell membrane. Receptor for prolactin-releasing peptide (PrRP). Implicated in lactation, regulation of food intake and pain-signal processing. The protein is Prolactin-releasing peptide receptor (PRLHR) of Homo sapiens (Human).